Reading from the N-terminus, the 247-residue chain is ATP synthase subunit a, chloroplastic (247 aa).

Transmembrane regions (helical) follow at residues 38-58 (QVLI…IIAV), 95-115 (VPFI…GALL), 134-154 (INTT…AGLS), 199-219 (LVVV…VMFL), and 220-240 (GLFT…AYIG).

This sequence belongs to the ATPase A chain family. As to quaternary structure, F-type ATPases have 2 components, CF(1) - the catalytic core - and CF(0) - the membrane proton channel. CF(1) has five subunits: alpha(3), beta(3), gamma(1), delta(1), epsilon(1). CF(0) has four main subunits: a, b, b' and c.

It is found in the plastid. The protein localises to the chloroplast thylakoid membrane. In terms of biological role, key component of the proton channel; it plays a direct role in the translocation of protons across the membrane. This is ATP synthase subunit a, chloroplastic from Oryza sativa subsp. indica (Rice).